Here is a 154-residue protein sequence, read N- to C-terminus: Superoxide dismutase [Cu-Zn] (154 aa).

Cu cation contacts are provided by His47, His49, and His64. Cys58 and Cys147 are disulfide-bonded. Zn(2+) is bound by residues His64, His72, His81, and Asp84. A Cu cation-binding site is contributed by His121.

Belongs to the Cu-Zn superoxide dismutase family. In terms of assembly, homodimer. The cofactor is Cu cation. It depends on Zn(2+) as a cofactor.

The protein resides in the cytoplasm. It carries out the reaction 2 superoxide + 2 H(+) = H2O2 + O2. Its function is as follows. Destroys radicals which are normally produced within the cells and which are toxic to biological systems. The sequence is that of Superoxide dismutase [Cu-Zn] (SODCC) from Pinus sylvestris (Scotch pine).